The sequence spans 362 residues: Phosphoserine aminotransferase (362 aa).

Residues serine 9 and arginine 42 each coordinate L-glutamate. Pyridoxal 5'-phosphate contacts are provided by residues glycine 76–arginine 77, tryptophan 102, threonine 153, aspartate 174, and glutamine 197. At lysine 198 the chain carries N6-(pyridoxal phosphate)lysine. Asparagine 239–threonine 240 contacts pyridoxal 5'-phosphate.

This sequence belongs to the class-V pyridoxal-phosphate-dependent aminotransferase family. SerC subfamily. In terms of assembly, homodimer. The cofactor is pyridoxal 5'-phosphate.

It localises to the cytoplasm. The catalysed reaction is O-phospho-L-serine + 2-oxoglutarate = 3-phosphooxypyruvate + L-glutamate. It carries out the reaction 4-(phosphooxy)-L-threonine + 2-oxoglutarate = (R)-3-hydroxy-2-oxo-4-phosphooxybutanoate + L-glutamate. Its pathway is amino-acid biosynthesis; L-serine biosynthesis; L-serine from 3-phospho-D-glycerate: step 2/3. The protein operates within cofactor biosynthesis; pyridoxine 5'-phosphate biosynthesis; pyridoxine 5'-phosphate from D-erythrose 4-phosphate: step 3/5. In terms of biological role, catalyzes the reversible conversion of 3-phosphohydroxypyruvate to phosphoserine and of 3-hydroxy-2-oxo-4-phosphonooxybutanoate to phosphohydroxythreonine. This Salmonella choleraesuis (strain SC-B67) protein is Phosphoserine aminotransferase.